A 288-amino-acid chain; its full sequence is Syntaxin-1A (288 aa).

Residues 1–13 show a composition bias toward basic and acidic residues; it reads MKDRTQELRTAKD. The tract at residues 1 to 20 is disordered; sequence MKDRTQELRTAKDSDDDDDV. The Cytoplasmic portion of the chain corresponds to 1 to 265; the sequence is MKDRTQELRT…KYQSKARRKK (265 aa). Phosphoserine is present on residues Ser14, Ser64, and Ser95. Residues 68-109 adopt a coiled-coil conformation; the sequence is DEKTKEELEELMSDIKKTANKVRSKLKSIEQSIEQEEGLNRS. A Phosphoserine; by DAPK1 modification is found at Ser188. Residues 192-254 enclose the t-SNARE coiled-coil homology domain; it reads LSEIETRHSE…ERAVSDTKKA (63 aa). Glycyl lysine isopeptide (Lys-Gly) (interchain with G-Cter in SUMO) cross-links involve residues Lys252, Lys253, and Lys256. The helical; Anchor for type IV membrane protein transmembrane segment at 266–288 threads the bilayer; it reads IMIIICCVILGIIIASTIGGIFG.

It belongs to the syntaxin family. In terms of assembly, part of the SNARE core complex containing SNAP25, VAMP2 and STX1A; this complex constitutes the basic catalytic machinery of the complex neurotransmitter release apparatus. The SNARE complex interacts with CPLX1. Interacts with STXBP1. The interaction with STXBP1 promotes assembly of the SNARE complex. Interacts (via C-terminus) with KCNB1 (via C-terminus); the interaction increases in a calcium-dependent manner and induces a pore-independent enhancement of exocytosis in neuroendocrine cells, chromaffin cells, pancreatic beta cells and from the soma of dorsal root ganglia (DRG) neurons. Interacts with SYTL4. Interacts with STXBP6. Interacts with PLCL1 (via C2 domain). Interacts with OTOF. Interacts with LGI3. Interacts (via the H3 domain) with SLC6A4 (via the N-terminus); this interaction regulates SLC4A6 channel conductance in thalamocortical neurons. Interacts with SYT6 and SYT8; the interaction is Ca(2+)-dependent. Interacts with VAMP8. Interacts with SNAP23. Interacts with VAPA and SYBU. Interacts with PRRT2. Interacts with SEPT8. Interacts with STXBP5L. Interacts with synaptotagmin-1/SYT1. Interacts with SEPTIN5; in the cerebellar cortex. Interacts with SEPTIN4; in the striatum. In terms of processing, phosphorylated by CK2. Phosphorylation at Ser-188 by DAPK1 significantly decreases its interaction with STXBP1. Post-translationally, (Microbial infection) Targeted and hydrolyzed by C.botulinum neurotoxin type C (BoNT/C), which hydrolyzes the 253-Lys-|-Ala-254 bond. Cleavage inhibits neurotransmitter release. Phosphorylated by CK2. Phosphorylation at Ser-188 by DAPK1 significantly decreases its interaction with STXBP1. In terms of processing, sumoylated, sumoylation is required for regulation of synaptic vesicle endocytosis. As to expression, expressed predominantly in cerebral cortex, hippocampus, cerebellum, adrenal medulla and retina with weak expression detected in non-neuronal tissues.

It localises to the cytoplasmic vesicle. The protein resides in the secretory vesicle. Its subcellular location is the synaptic vesicle membrane. The protein localises to the cell membrane. It is found in the synapse. It localises to the synaptosome. Plays an essential role in hormone and neurotransmitter calcium-dependent exocytosis and endocytosis. Part of the SNARE (Soluble NSF Attachment Receptor) complex composed of SNAP25, STX1A and VAMP2 which mediates the fusion of synaptic vesicles with the presynaptic plasma membrane. STX1A and SNAP25 are localized on the plasma membrane while VAMP2 resides in synaptic vesicles. The pairing of the three SNAREs from the N-terminal SNARE motifs to the C-terminal anchors leads to the formation of the SNARE complex, which brings membranes into close proximity and results in final fusion. Participates in the calcium-dependent regulation of acrosomal exocytosis in sperm. Also plays an important role in the exocytosis of hormones such as insulin or glucagon-like peptide 1 (GLP-1). This chain is Syntaxin-1A (Stx1a), found in Rattus norvegicus (Rat).